The chain runs to 227 residues: MAYPFQLGLQDASSPIMEELMNFHDHTLMIVFLISSLVLYLMALMLSTKLIHTSTMDAQEVETIWTILPAIILIMIALPSLRILYMMDEINNPILTVKTMGHQWYWSYEYTDYEDLCFDSYMIPTNELKPGELRLLEVDNRIVLPMELPIRMLISSEDVLHSWAVPSLGLKTDAIPGRLNQATITSNRPGVFYGQCSEICGSNHSFMPIVLEMIPLKLFENWSMSMT.

Over 1–14 the chain is Mitochondrial intermembrane; that stretch reads MAYPFQLGLQDASS. Residues 15-45 traverse the membrane as a helical segment; sequence PIMEELMNFHDHTLMIVFLISSLVLYLMALM. The Mitochondrial matrix portion of the chain corresponds to 46 to 59; that stretch reads LSTKLIHTSTMDAQ. Residues 60–87 traverse the membrane as a helical segment; the sequence is EVETIWTILPAIILIMIALPSLRILYMM. Topologically, residues 88 to 227 are mitochondrial intermembrane; it reads DEINNPILTV…LFENWSMSMT (140 aa). Residues histidine 161, cysteine 196, glutamate 198, cysteine 200, histidine 204, and methionine 207 each coordinate Cu cation. Mg(2+) is bound at residue glutamate 198.

Belongs to the cytochrome c oxidase subunit 2 family. In terms of assembly, component of the cytochrome c oxidase (complex IV, CIV), a multisubunit enzyme composed of 14 subunits. The complex is composed of a catalytic core of 3 subunits MT-CO1, MT-CO2 and MT-CO3, encoded in the mitochondrial DNA, and 11 supernumerary subunits COX4I, COX5A, COX5B, COX6A, COX6B, COX6C, COX7A, COX7B, COX7C, COX8 and NDUFA4, which are encoded in the nuclear genome. The complex exists as a monomer or a dimer and forms supercomplexes (SCs) in the inner mitochondrial membrane with NADH-ubiquinone oxidoreductase (complex I, CI) and ubiquinol-cytochrome c oxidoreductase (cytochrome b-c1 complex, complex III, CIII), resulting in different assemblies (supercomplex SCI(1)III(2)IV(1) and megacomplex MCI(2)III(2)IV(2)). Found in a complex with TMEM177, COA6, COX18, COX20, SCO1 and SCO2. Interacts with TMEM177 in a COX20-dependent manner. Interacts with COX20. Interacts with COX16. Requires Cu cation as cofactor.

It localises to the mitochondrion inner membrane. It carries out the reaction 4 Fe(II)-[cytochrome c] + O2 + 8 H(+)(in) = 4 Fe(III)-[cytochrome c] + 2 H2O + 4 H(+)(out). In terms of biological role, component of the cytochrome c oxidase, the last enzyme in the mitochondrial electron transport chain which drives oxidative phosphorylation. The respiratory chain contains 3 multisubunit complexes succinate dehydrogenase (complex II, CII), ubiquinol-cytochrome c oxidoreductase (cytochrome b-c1 complex, complex III, CIII) and cytochrome c oxidase (complex IV, CIV), that cooperate to transfer electrons derived from NADH and succinate to molecular oxygen, creating an electrochemical gradient over the inner membrane that drives transmembrane transport and the ATP synthase. Cytochrome c oxidase is the component of the respiratory chain that catalyzes the reduction of oxygen to water. Electrons originating from reduced cytochrome c in the intermembrane space (IMS) are transferred via the dinuclear copper A center (CU(A)) of subunit 2 and heme A of subunit 1 to the active site in subunit 1, a binuclear center (BNC) formed by heme A3 and copper B (CU(B)). The BNC reduces molecular oxygen to 2 water molecules using 4 electrons from cytochrome c in the IMS and 4 protons from the mitochondrial matrix. In Gerbillus gerbillus (Lesser Egyptian gerbil), this protein is Cytochrome c oxidase subunit 2 (MT-CO2).